Reading from the N-terminus, the 354-residue chain is Small ribosomal subunit biogenesis GTPase RsgA (354 aa).

Positions 1-46 (MSKKKPLSQGQLRRMRANHEKRLNRDSGDKNTPELQDSSLGPEQSG) are disordered. The span at 17-32 (ANHEKRLNRDSGDKNT) shows a compositional bias: basic and acidic residues. Polar residues predominate over residues 33–46 (PELQDSSLGPEQSG). The CP-type G domain occupies 108–276 (HSSLSRPDLY…LIDSPGVREF (169 aa)). GTP contacts are provided by residues 164–167 (NKID) and 218–226 (GQSGVGKSS). Zn(2+) contacts are provided by cysteine 300, cysteine 305, histidine 307, and cysteine 313.

It belongs to the TRAFAC class YlqF/YawG GTPase family. RsgA subfamily. In terms of assembly, monomer. Associates with 30S ribosomal subunit, binds 16S rRNA. It depends on Zn(2+) as a cofactor.

It is found in the cytoplasm. One of several proteins that assist in the late maturation steps of the functional core of the 30S ribosomal subunit. Helps release RbfA from mature subunits. May play a role in the assembly of ribosomal proteins into the subunit. Circularly permuted GTPase that catalyzes slow GTP hydrolysis, GTPase activity is stimulated by the 30S ribosomal subunit. The chain is Small ribosomal subunit biogenesis GTPase RsgA from Shewanella oneidensis (strain ATCC 700550 / JCM 31522 / CIP 106686 / LMG 19005 / NCIMB 14063 / MR-1).